Reading from the N-terminus, the 112-residue chain is MSRMNDETMEDKPDDSNGPLSILMDSVNNNTQVLINVRNNKKLLGRVRAFDRHCNMVLENVKEIWTEVPKTAKGKKKAKPINKDRFISKMFLRGDSVILVLKNPLGAPPQAN.

The segment covering 1-15 (MSRMNDETMEDKPDD) has biased composition (basic and acidic residues). The interval 1-23 (MSRMNDETMEDKPDDSNGPLSIL) is disordered. The 87-residue stretch at 20–106 (LSILMDSVNN…VILVLKNPLG (87 aa)) folds into the Sm domain.

This sequence belongs to the snRNP core protein family.

Its subcellular location is the nucleus. The protein localises to the cytoplasm. It is found in the cytosol. Functionally, plays a role in pre-mRNA splicing as a core component of the spliceosomal U1, U2, U4 and U5 small nuclear ribonucleoproteins (snRNPs), the building blocks of the spliceosome. The protein is Probable small nuclear ribonucleoprotein Sm D2 (snrpd2) of Dictyostelium discoideum (Social amoeba).